Here is a 323-residue protein sequence, read N- to C-terminus: MDPKYQRVALNDGHFMPVLGFGSYAPPEVPRNRVVEVTKLAIEAGFRHIDSAYLYNNEEQVGLAIRSKIADGSVKREDIFYTSKLWCTFFRPQLVQPALESSLKKLQLDYVDLYLIHFPMALKPGETPLPKDENGKVMFDTVDLCAIWEAMEKCKDAGLAKSIGVSNFNRRQLEMILNNPGLKYKPVCNQVECHPYLNQSKLLDFCKSKDIVLVAHSALGTQRHKLWVDQNSPALLEDPVLCALAKKHKRSPALIALRYQLQRGVVVLAKSYNEQRIRENVQVFEFQLTSEDMKVLDDLNRNFRYVVMDFLVDHPDYPFSDEY.

NADP(+) contacts are provided by residues 20-24 (GFGSY) and D50. Catalysis depends on Y55, which acts as the Proton donor. Residue H117 coordinates substrate. Residues 166-167 (SN), Q190, 216-221 (HSALGT), and 270-280 (KSYNEQRIREN) contribute to the NADP(+) site.

This sequence belongs to the aldo/keto reductase family. Monomer. High expression in liver. Also expressed in kidney.

It localises to the cytoplasm. The protein localises to the cytosol. It catalyses the reaction chlordecone alcohol + NADP(+) = chlordecone + NADPH + H(+). The catalysed reaction is a 3alpha-hydroxysteroid + NADP(+) = a 3-oxosteroid + NADPH + H(+). The enzyme catalyses a 3alpha-hydroxysteroid + NAD(+) = a 3-oxosteroid + NADH + H(+). It carries out the reaction 5alpha-androstane-3alpha,17beta-diol + NADP(+) = 17beta-hydroxy-5alpha-androstan-3-one + NADPH + H(+). It catalyses the reaction 5alpha-androstane-3beta,17beta-diol + NADP(+) = 17beta-hydroxy-5alpha-androstan-3-one + NADPH + H(+). The catalysed reaction is 5alpha-androstane-3alpha,17beta-diol + NAD(+) = 17beta-hydroxy-5alpha-androstan-3-one + NADH + H(+). The enzyme catalyses 17beta-estradiol + NADP(+) = estrone + NADPH + H(+). It carries out the reaction 17beta-estradiol + NAD(+) = estrone + NADH + H(+). It catalyses the reaction (20S)-hydroxypregn-4-en-3-one + NADP(+) = progesterone + NADPH + H(+). The catalysed reaction is (20S)-hydroxypregn-4-en-3-one + NAD(+) = progesterone + NADH + H(+). The enzyme catalyses androsterone + NADP(+) = 5alpha-androstan-3,17-dione + NADPH + H(+). It carries out the reaction testosterone + NADP(+) = androst-4-ene-3,17-dione + NADPH + H(+). It catalyses the reaction testosterone + NAD(+) = androst-4-ene-3,17-dione + NADH + H(+). The catalysed reaction is 3alpha-hydroxy-5alpha-androstane 17-O-(beta-D-glucuronate) + NADP(+) = 5alpha-dihydrotestosterone 17-O-(beta-D-glucuronate) + NADPH + H(+). The enzyme catalyses (3beta,5alpha,17beta)-3-hydroxy-androstan-17-yl sulfate + NADP(+) = 5alpha-dihydrotestosterone sulfate + NADPH + H(+). It carries out the reaction 5alpha-androstane-3alpha,17beta-diol + NAD(+) = androsterone + NADH + H(+). It functions in the pathway steroid metabolism. With respect to regulation, potently inhibited by benzbromarone, 3',3'',5',5''-tetrabromophenolphthalein (TBPP) and o-cresolphthalein. Functionally, cytosolic aldo-keto reductase that catalyzes the NADH and NADPH-dependent reduction of ketosteroids to hydroxysteroids. Liver specific enzyme that acts as an NAD(P)(H)-dependent 3-, 17- and 20-ketosteroid reductase on the steroid nucleus and side chain. Displays the ability to catalyze both oxidation and reduction in vitro, but most probably acts as a reductase in vivo since the oxidase activity measured in vitro is inhibited by physiological concentration of NADPH. Acts preferentially as a 3-alpha-hydroxysteroid dehydrogenase (HSD) with a subsidiary 3-beta-HSD activity. Catalyzes efficiently the transformation of the potent androgen 5-alpha-dihydrotestosterone (5alpha-DHT or 17beta-hydroxy-5alpha-androstan-3-one) into the less active form, 5-alpha-androstan-3-alpha,17-beta-diol (3-alpha-diol). Catalyzes the reduction of estrone into 17beta-estradiol but with low efficiency. Metabolizes a broad spectrum of natural and synthetic therapeutic steroid and plays an important role in metabolism of androgens, estrogens, progestereone and conjugated steroids. Catalyzes the biotransformation of the pesticide chlordecone (kepone) to its corresponding alcohol leading to increased biliary excretion of the pesticide and concomitant reduction of its neurotoxicity since bile is the major excretory route. This Macaca fuscata fuscata (Japanese macaque) protein is Aldo-keto reductase family 1 member C4 (AKR1C4).